The sequence spans 444 residues: Putative dipeptidase CPC735_015490 (444 aa).

The signal sequence occupies residues 1 to 34 (MSQRTEHNGSWLRNAGSLLSVLACVAVLASPASA). His-67, Asp-69, and Glu-178 together coordinate Zn(2+). A disulfide bridge connects residues Cys-118 and Cys-207. His-205 lines the substrate pocket. 2 residues coordinate Zn(2+): His-250 and His-271. Positions 282 and 342 each coordinate substrate. An N-linked (GlcNAc...) asparagine glycan is attached at Asn-413.

Belongs to the metallo-dependent hydrolases superfamily. Peptidase M19 family. It depends on Zn(2+) as a cofactor.

The enzyme catalyses an L-aminoacyl-L-amino acid + H2O = 2 an L-alpha-amino acid. Hydrolyzes a wide range of dipeptides. This chain is Putative dipeptidase CPC735_015490, found in Coccidioides posadasii (strain C735) (Valley fever fungus).